The sequence spans 208 residues: GATA transcription factor 29 (208 aa).

A GATA-type; atypical zinc finger spans residues 155 to 208; the sequence is GMKKCTNMNCNALNTPMWRRGPLGPKSLCNACGIKFRKEEERKAKRNVVIVLDD.

It belongs to the type IV zinc-finger family. Class B subfamily.

The protein resides in the nucleus. Functionally, transcriptional regulator that specifically binds 5'-GATA-3' or 5'-GAT-3' motifs within gene promoters. This chain is GATA transcription factor 29 (GATA29), found in Arabidopsis thaliana (Mouse-ear cress).